The primary structure comprises 668 residues: Exoribonuclease 2 (668 aa).

The 329-residue stretch at 193 to 521 folds into the RNB domain; it reads RIEMTHVPFV…INHRMLKAVI (329 aa). In terms of domain architecture, S1 motif spans 568–650; it reads QTCFTGEIFD…ENRSLVAKPT (83 aa).

It belongs to the RNR ribonuclease family. RNase II subfamily.

The protein resides in the cytoplasm. It catalyses the reaction Exonucleolytic cleavage in the 3'- to 5'-direction to yield nucleoside 5'-phosphates.. Involved in mRNA degradation. Hydrolyzes single-stranded polyribonucleotides processively in the 3' to 5' direction. The chain is Exoribonuclease 2 from Vibrio parahaemolyticus serotype O3:K6 (strain RIMD 2210633).